The chain runs to 579 residues: Cytochrome P450 monooxygenase prx9 (579 aa).

A helical membrane pass occupies residues 6-25 (LPLGSFVGTTLLLFILYKLV). N-linked (GlcNAc...) asparagine glycans are attached at residues N194, N292, and N390. Residue C512 coordinates heme.

The protein belongs to the cytochrome P450 family. Heme is required as a cofactor.

It is found in the membrane. The protein operates within sesquiterpene biosynthesis. Its function is as follows. Cytochrome P450 monooxygenase; part of the gene cluster that mediates the biosynthesis of PR-toxin, a bicyclic sesquiterpene belonging to the eremophilane class and acting as a mycotoxin. The first step of the pathway is catalyzed by the aristolochene synthase which performs the cyclization of trans,trans-farnesyl diphosphate (FPP) to the bicyclic sesquiterpene aristolochene. Following the formation of aristolochene, the non-oxygenated aristolochene is converted to the trioxygenated intermediate eremofortin B, via 7-epi-neopetasone. This conversion appears to involve three enzymes, a hydroxysterol oxidase-like enzyme, the quinone-oxidase prx3 that forms the quinone-type-structure in the bicyclic nucleus of aristolochene with the C8-oxo group and the C-3 hydroxyl group, and the P450 monooxygenase prx9 that introduces the epoxide at the double bond between carbons 1 and 2. No monoxy or dioxy-intermediates have been reported to be released to the broth, so these three early oxidative reactions may be coupled together. Eremofortin B is further oxidized by another P450 monooxygenase, that introduces a second epoxide between carbons 7 and 11 prior to acetylation to eremofortin A by the acetyltransferase prx11. The second epoxidation may be performed by a second P450 monooxygenase. After the acetylation step, eremofortin A is converted to eremofortin C and then to PR-toxin. First the conversion of eremofortin A to eremofortin C proceeds by oxidation of the side chain of the molecule at C-12 and is catalyzed by the short-chain oxidoreductase prx1. The cytochrome P450 monooxygenase prx8 also plays a role in this step. The primary alcohol formed at C-12 is finally oxidized by the short-chain alcohol dehydrogenase prx4 that forms PR-toxin. This is Cytochrome P450 monooxygenase prx9 from Penicillium rubens (strain ATCC 28089 / DSM 1075 / NRRL 1951 / Wisconsin 54-1255) (Penicillium chrysogenum).